Reading from the N-terminus, the 247-residue chain is Carboxy-S-adenosyl-L-methionine synthase (247 aa).

S-adenosyl-L-methionine is bound by residues tyrosine 40, 65–67 (GAS), 90–91 (DN), 122–123 (DI), asparagine 137, and arginine 204.

The protein belongs to the class I-like SAM-binding methyltransferase superfamily. Cx-SAM synthase family. In terms of assembly, homodimer.

The catalysed reaction is prephenate + S-adenosyl-L-methionine = carboxy-S-adenosyl-L-methionine + 3-phenylpyruvate + H2O. Its function is as follows. Catalyzes the conversion of S-adenosyl-L-methionine (SAM) to carboxy-S-adenosyl-L-methionine (Cx-SAM). This chain is Carboxy-S-adenosyl-L-methionine synthase, found in Pseudomonas putida (strain GB-1).